A 375-amino-acid chain; its full sequence is Succinyl-diaminopimelate desuccinylase (375 aa).

A Zn(2+)-binding site is contributed by H66. Residue D68 is part of the active site. Position 99 (D99) interacts with Zn(2+). E133 functions as the Proton acceptor in the catalytic mechanism. The Zn(2+) site is built by E134, E162, and H348.

This sequence belongs to the peptidase M20A family. DapE subfamily. In terms of assembly, homodimer. Zn(2+) serves as cofactor. Co(2+) is required as a cofactor.

The catalysed reaction is N-succinyl-(2S,6S)-2,6-diaminopimelate + H2O = (2S,6S)-2,6-diaminopimelate + succinate. The protein operates within amino-acid biosynthesis; L-lysine biosynthesis via DAP pathway; LL-2,6-diaminopimelate from (S)-tetrahydrodipicolinate (succinylase route): step 3/3. Functionally, catalyzes the hydrolysis of N-succinyl-L,L-diaminopimelic acid (SDAP), forming succinate and LL-2,6-diaminopimelate (DAP), an intermediate involved in the bacterial biosynthesis of lysine and meso-diaminopimelic acid, an essential component of bacterial cell walls. In Escherichia coli O7:K1 (strain IAI39 / ExPEC), this protein is Succinyl-diaminopimelate desuccinylase.